We begin with the raw amino-acid sequence, 209 residues long: uncharacterized protein (209 aa).

The stretch at 13–75 (LSAVDKQMDT…AINLAAVMTD (63 aa)) forms a coiled coil. The tract at residues 107 to 135 (ATPLPSSNTNNEQSMSTYSSSISGKTSET) is disordered. Over residues 110 to 119 (LPSSNTNNEQ) the composition is skewed to polar residues. Positions 120–133 (SMSTYSSSISGKTS) are enriched in low complexity.

It belongs to the asfivirus K205R family.

Its subcellular location is the host cytoplasm. Its function is as follows. Induces host endoplasmic reticulum stress and consequently activates autophagy and NF-kappa-B signaling pathway. In turn, may induce autophagy-mediated STING1 degradation and innate immune evasion. This is an uncharacterized protein from Ornithodoros (relapsing fever ticks).